Consider the following 195-residue polypeptide: Pyridoxal 5'-phosphate synthase subunit PdxT (195 aa).

L-glutamine is bound at residue 49–51 (GES). Catalysis depends on C81, which acts as the Nucleophile. L-glutamine-binding positions include R113 and 141 to 142 (IR). Active-site charge relay system residues include H177 and E179.

Belongs to the glutaminase PdxT/SNO family. As to quaternary structure, in the presence of PdxS, forms a dodecamer of heterodimers. Only shows activity in the heterodimer.

It catalyses the reaction aldehydo-D-ribose 5-phosphate + D-glyceraldehyde 3-phosphate + L-glutamine = pyridoxal 5'-phosphate + L-glutamate + phosphate + 3 H2O + H(+). It carries out the reaction L-glutamine + H2O = L-glutamate + NH4(+). It participates in cofactor biosynthesis; pyridoxal 5'-phosphate biosynthesis. Functionally, catalyzes the hydrolysis of glutamine to glutamate and ammonia as part of the biosynthesis of pyridoxal 5'-phosphate. The resulting ammonia molecule is channeled to the active site of PdxS. The chain is Pyridoxal 5'-phosphate synthase subunit PdxT from Mycolicibacterium vanbaalenii (strain DSM 7251 / JCM 13017 / BCRC 16820 / KCTC 9966 / NRRL B-24157 / PYR-1) (Mycobacterium vanbaalenii).